The primary structure comprises 428 residues: Serine--tRNA ligase (428 aa).

An L-serine-binding site is contributed by 235–237; it reads TAE. Residue 266–268 coordinates ATP; sequence RSE. E289 contributes to the L-serine binding site. 353 to 356 provides a ligand contact to ATP; the sequence is EISS. S389 is a binding site for L-serine.

It belongs to the class-II aminoacyl-tRNA synthetase family. Type-1 seryl-tRNA synthetase subfamily. In terms of assembly, homodimer. The tRNA molecule binds across the dimer.

The protein localises to the cytoplasm. The catalysed reaction is tRNA(Ser) + L-serine + ATP = L-seryl-tRNA(Ser) + AMP + diphosphate + H(+). It catalyses the reaction tRNA(Sec) + L-serine + ATP = L-seryl-tRNA(Sec) + AMP + diphosphate + H(+). It functions in the pathway aminoacyl-tRNA biosynthesis; selenocysteinyl-tRNA(Sec) biosynthesis; L-seryl-tRNA(Sec) from L-serine and tRNA(Sec): step 1/1. Functionally, catalyzes the attachment of serine to tRNA(Ser). Is also able to aminoacylate tRNA(Sec) with serine, to form the misacylated tRNA L-seryl-tRNA(Sec), which will be further converted into selenocysteinyl-tRNA(Sec). This chain is Serine--tRNA ligase, found in Shewanella baltica (strain OS223).